The sequence spans 960 residues: Pentatricopeptide repeat-containing protein At3g63370, chloroplastic (960 aa).

Residues 1-64 (MEYAVTNMRL…PKLACFDGVL (64 aa)) constitute a chloroplast transit peptide. PPR repeat units lie at residues 79–109 (PVEA…IFKT), 115–145 (LDFL…MPDR), 146–180 (TAFA…GVPL), 181–215 (GLSS…GYHS), 216–246 (TGFI…FQEK), 248–282 (DAVL…GPAP), 283–317 (NSYT…STHS), 319–349 (ELYV…MNNA), 350–384 (DVVT…GHKS), 385–419 (DEVS…GWDS), 420–450 (NLQV…MHDK), 451–485 (DLIS…RMEI), 486–516 (DEMI…ILRK), 520–550 (DTVI…IKGK), 551–585 (DVVS…GLSA), 586–620 (DSVA…GFCL), 621–651 (EGSI…IERK), 652–686 (GLLQ…NVSP), 687–717 (DHIS…MEHE), and 723–753 (WPEH…MKTE). The tract at residues 758 to 833 (VWCALLAACR…HPGCSWIEMD (76 aa)) is type E motif. The segment at 834 to 864 (GKVHKFTARDKSHPESKEIYEKLSEVTRKLE) is type E(+) motif. A type DYW motif region spans residues 865–960 (REVGYVADTK…SGLCSCGDSW (96 aa)).

It belongs to the PPR family. PCMP-H subfamily.

It localises to the plastid. The protein resides in the chloroplast. Functionally, involved in RNA editing event in chloroplasts. Required for the editing of a single site in rps14 transcript. This chain is Pentatricopeptide repeat-containing protein At3g63370, chloroplastic (PCMP-H83), found in Arabidopsis thaliana (Mouse-ear cress).